The chain runs to 48 residues: Small polypeptide DEVIL 22 (48 aa).

The chain crosses the membrane as a helical span at residues 7-23; that stretch reads KLNKGHAFTSKCASLVK. Residues 13-44 are required for DVL/RTFL small polypeptide activity; sequence AFTSKCASLVKEQRARLYILRRCATMLCCWYI.

The protein belongs to the DVL/RTFL small polypeptides family.

It is found in the cell membrane. Small polypeptide acting as a regulatory molecule which coordinates cellular responses required for differentiation, growth and development, probably by restricting polar cell proliferation in lateral organs and coordinating socket cell recruitment and differentiation at trichome sites. This is Small polypeptide DEVIL 22 from Arabidopsis thaliana (Mouse-ear cress).